Reading from the N-terminus, the 446-residue chain is Phosphoglucosamine mutase (446 aa).

The active-site Phosphoserine intermediate is S101. S101, D240, D242, and D244 together coordinate Mg(2+). A Phosphoserine modification is found at S101.

Belongs to the phosphohexose mutase family. Mg(2+) is required as a cofactor. In terms of processing, activated by phosphorylation.

It catalyses the reaction alpha-D-glucosamine 1-phosphate = D-glucosamine 6-phosphate. Catalyzes the conversion of glucosamine-6-phosphate to glucosamine-1-phosphate. The sequence is that of Phosphoglucosamine mutase from Coxiella burnetii (strain RSA 331 / Henzerling II).